The primary structure comprises 422 residues: Serine--tRNA ligase (422 aa).

229 to 231 (TAE) contacts L-serine. 260–262 (RAE) is a binding site for ATP. E283 lines the L-serine pocket. Residue 347–350 (EISS) coordinates ATP. Residue S383 coordinates L-serine.

The protein belongs to the class-II aminoacyl-tRNA synthetase family. Type-1 seryl-tRNA synthetase subfamily. Homodimer. The tRNA molecule binds across the dimer.

The protein resides in the cytoplasm. The catalysed reaction is tRNA(Ser) + L-serine + ATP = L-seryl-tRNA(Ser) + AMP + diphosphate + H(+). It carries out the reaction tRNA(Sec) + L-serine + ATP = L-seryl-tRNA(Sec) + AMP + diphosphate + H(+). Its pathway is aminoacyl-tRNA biosynthesis; selenocysteinyl-tRNA(Sec) biosynthesis; L-seryl-tRNA(Sec) from L-serine and tRNA(Sec): step 1/1. Its function is as follows. Catalyzes the attachment of serine to tRNA(Ser). Is also able to aminoacylate tRNA(Sec) with serine, to form the misacylated tRNA L-seryl-tRNA(Sec), which will be further converted into selenocysteinyl-tRNA(Sec). The sequence is that of Serine--tRNA ligase from Halothermothrix orenii (strain H 168 / OCM 544 / DSM 9562).